Here is a 693-residue protein sequence, read N- to C-terminus: Elongation factor G (693 aa).

The tr-type G domain maps to 7-282 (EKIRNIGITA…SVIDYLPAPT (276 aa)). GTP is bound by residues 16-23 (AHIDAGKT), 80-84 (DTPGH), and 134-137 (NKLD).

It belongs to the TRAFAC class translation factor GTPase superfamily. Classic translation factor GTPase family. EF-G/EF-2 subfamily.

It localises to the cytoplasm. Catalyzes the GTP-dependent ribosomal translocation step during translation elongation. During this step, the ribosome changes from the pre-translocational (PRE) to the post-translocational (POST) state as the newly formed A-site-bound peptidyl-tRNA and P-site-bound deacylated tRNA move to the P and E sites, respectively. Catalyzes the coordinated movement of the two tRNA molecules, the mRNA and conformational changes in the ribosome. This is Elongation factor G from Granulibacter bethesdensis (strain ATCC BAA-1260 / CGDNIH1).